The primary structure comprises 49 residues: Large ribosomal subunit protein eL40 (49 aa).

The protein belongs to the eukaryotic ribosomal protein eL40 family.

This Archaeoglobus fulgidus (strain ATCC 49558 / DSM 4304 / JCM 9628 / NBRC 100126 / VC-16) protein is Large ribosomal subunit protein eL40.